Consider the following 217-residue polypeptide: Probable GTP-binding protein EngB (217 aa).

One can recognise an EngB-type G domain in the interval 33–217 (GPTEIAFAGR…RAAIELAVTR (185 aa)). GTP contacts are provided by residues 41–48 (GRSNVGKS), 68–72 (GRTQE), 95–98 (DMPG), 162–165 (TKTD), and 196–198 (TSS). Residues Ser48 and Thr70 each coordinate Mg(2+).

Belongs to the TRAFAC class TrmE-Era-EngA-EngB-Septin-like GTPase superfamily. EngB GTPase family. The cofactor is Mg(2+).

In terms of biological role, necessary for normal cell division and for the maintenance of normal septation. In Rhizobium meliloti (strain 1021) (Ensifer meliloti), this protein is Probable GTP-binding protein EngB.